Consider the following 298-residue polypeptide: Cytidine deaminase (298 aa).

2 CMP/dCMP-type deaminase domains span residues 47–167 (TEQQ…FGPS) and 186–298 (DSDD…PLLG). 88-90 (NLE) contributes to the substrate binding site. Zn(2+) is bound at residue His101. The Proton donor role is filled by Glu103. Positions 128 and 131 each coordinate Zn(2+).

It belongs to the cytidine and deoxycytidylate deaminase family. In terms of assembly, homodimer. It depends on Zn(2+) as a cofactor.

The enzyme catalyses cytidine + H2O + H(+) = uridine + NH4(+). It carries out the reaction 2'-deoxycytidine + H2O + H(+) = 2'-deoxyuridine + NH4(+). Its function is as follows. This enzyme scavenges exogenous and endogenous cytidine and 2'-deoxycytidine for UMP synthesis. The chain is Cytidine deaminase from Shewanella frigidimarina (strain NCIMB 400).